A 1158-amino-acid chain; its full sequence is ATP-dependent helicase/deoxyribonuclease subunit B (1158 aa).

Residues 1–275 (MTLHAYLGRA…QYFNQLYRFN (275 aa)) enclose the UvrD-like helicase ATP-binding domain. 8 to 15 (GRAGTGKS) serves as a coordination point for ATP. Positions 269-583 (NQLYRFNNQD…SIGTMDLAKV (315 aa)) constitute a UvrD-like helicase C-terminal domain. [4Fe-4S] cluster contacts are provided by Cys-784, Cys-1112, Cys-1115, and Cys-1121.

It belongs to the helicase family. AddB/RexB type 1 subfamily. As to quaternary structure, heterodimer of AddA and AddB. The cofactor is Mg(2+). Requires [4Fe-4S] cluster as cofactor.

In terms of biological role, the heterodimer acts as both an ATP-dependent DNA helicase and an ATP-dependent, dual-direction single-stranded exonuclease. Recognizes the chi site generating a DNA molecule suitable for the initiation of homologous recombination. The AddB subunit has 5' -&gt; 3' nuclease activity but not helicase activity. This Staphylococcus aureus (strain MW2) protein is ATP-dependent helicase/deoxyribonuclease subunit B.